The sequence spans 159 residues: Transmembrane protein 92 (159 aa).

An N-terminal signal peptide occupies residues 1 to 26; that stretch reads MSQAWVPGLAPTLLFSLLAGPQKIAA. At 27-57 the chain is on the extracellular side; it reads KCGLILACPKGFKCCGDSCCQENELFPGPVR. The helical transmembrane segment at 58–78 threads the bilayer; sequence IFVIIFLVILSVFCICGLAKC. The Cytoplasmic segment spans residues 79 to 159; sequence FCRNCREPEP…DQRGIDNPAF (81 aa). The interval 122–159 is disordered; it reads EVILKPSLGPTPTEPPPPYSFRPEEYTGDQRGIDNPAF.

The protein localises to the membrane. This chain is Transmembrane protein 92 (TMEM92), found in Homo sapiens (Human).